The sequence spans 464 residues: Cerebellar degeneration-related protein 2-like (464 aa).

Coiled-coil stretches lie at residues 31 to 154 (AAEL…RRKT), 201 to 264 (VSSL…KSRV), and 342 to 379 (MSIL…AEVQ). The tract at residues 371–419 (ESLRHAEVQTSRPVSRDPSMKECRVAEPQQPPPTPPQTPSTPEALEGIS) is disordered. Over residues 384–395 (VSRDPSMKECRV) the composition is skewed to basic and acidic residues. The span at 399–409 (QQPPPTPPQTP) shows a compositional bias: pro residues.

This sequence belongs to the CDR2 family.

This Danio rerio (Zebrafish) protein is Cerebellar degeneration-related protein 2-like (cdr2l).